A 555-amino-acid polypeptide reads, in one-letter code: Glutamine--tRNA ligase (555 aa).

The short motif at 35 to 45 (PEPNGYLHIGH) is the 'HIGH' region element. ATP contacts are provided by residues 36–38 (EPN) and 42–48 (HIGHAKS). Residues aspartate 68 and tyrosine 213 each contribute to the L-glutamine site. Residues threonine 232 and 262-263 (RL) contribute to the ATP site. A 'KMSKS' region motif is present at residues 269–273 (ITSKR).

Belongs to the class-I aminoacyl-tRNA synthetase family. Monomer.

Its subcellular location is the cytoplasm. It carries out the reaction tRNA(Gln) + L-glutamine + ATP = L-glutaminyl-tRNA(Gln) + AMP + diphosphate. This chain is Glutamine--tRNA ligase, found in Ectopseudomonas mendocina (strain ymp) (Pseudomonas mendocina).